Consider the following 257-residue polypeptide: Zinc import ATP-binding protein ZnuC (257 aa).

Positions 5-220 (VELQSVTVTF…PSYVALFGQQ (216 aa)) constitute an ABC transporter domain. 37–44 (GPNGAGKS) lines the ATP pocket. The interval 234–257 (HEHDLAGSPVGPCQHNKQHGHDNA) is disordered.

The protein belongs to the ABC transporter superfamily. Zinc importer (TC 3.A.1.15.5) family. In terms of assembly, the complex is composed of two ATP-binding proteins (ZnuC), two transmembrane proteins (ZnuB) and a solute-binding protein (ZnuA).

The protein localises to the cell inner membrane. It carries out the reaction Zn(2+)(out) + ATP(in) + H2O(in) = Zn(2+)(in) + ADP(in) + phosphate(in) + H(+)(in). In terms of biological role, part of the ABC transporter complex ZnuABC involved in zinc import. Responsible for energy coupling to the transport system. The polypeptide is Zinc import ATP-binding protein ZnuC (Photobacterium profundum (strain SS9)).